The sequence spans 238 residues: Ribonuclease PH (238 aa).

Residues Arg-86 and 124–126 (GTR) contribute to the phosphate site.

This sequence belongs to the RNase PH family. In terms of assembly, homohexameric ring arranged as a trimer of dimers.

It catalyses the reaction tRNA(n+1) + phosphate = tRNA(n) + a ribonucleoside 5'-diphosphate. Phosphorolytic 3'-5' exoribonuclease that plays an important role in tRNA 3'-end maturation. Removes nucleotide residues following the 3'-CCA terminus of tRNAs; can also add nucleotides to the ends of RNA molecules by using nucleoside diphosphates as substrates, but this may not be physiologically important. Probably plays a role in initiation of 16S rRNA degradation (leading to ribosome degradation) during starvation. The chain is Ribonuclease PH from Histophilus somni (strain 2336) (Haemophilus somnus).